The sequence spans 549 residues: Tight junction-associated protein 1 (549 aa).

Positions 1 to 34 (MSSAAPAKKPYRKAPPEHRELRLEIPVSRLEQEE) are disordered. The span at 14 to 23 (APPEHRELRL) shows a compositional bias: basic and acidic residues. The stretch at 42–171 (MKLLQQENEE…EELNERYRLD (130 aa)) forms a coiled coil. 2 disordered regions span residues 207–226 (RSGQ…LSPG) and 266–322 (VDMS…PLYP). Ser295 carries the phosphoserine modification. The segment covering 311 to 320 (YPTPSPPHPL) has biased composition (pro residues). Thr313 carries the phosphothreonine modification. Residues Ser315 and Ser340 each carry the phosphoserine modification. Disordered stretches follow at residues 359-404 (EDGS…SEED), 410-429 (QRAF…RTAF), and 434-549 (LPEL…TVLS). Residues 369 to 383 (SVPSSPASAQGSPHH) show a composition bias toward polar residues. Residues 389–400 (PSALSAPASSAS) are compositionally biased toward low complexity. Residue Thr417 is modified to Phosphothreonine. The residue at position 483 (Ser483) is a Phosphoserine. The segment covering 485–498 (EEERQSLLPDKEGT) has biased composition (basic and acidic residues). The segment covering 522 to 534 (RSPKRMGVHHLHR) has biased composition (basic residues). The residue at position 537 (Ser537) is a Phosphoserine. Positions 538–549 (LTQAQEQGTVLS) are enriched in polar residues.

In terms of assembly, interacts with DLG1. Interacts with ARF6 (GTP-bound form). In terms of tissue distribution, widely expressed including in adult thymus, heart, lung, liver, small intestine, kidney, spleen, testis and skeletal muscle and in embryonic brain but not detected in adult brain (at protein level).

It localises to the golgi apparatus. Its subcellular location is the trans-Golgi network. It is found in the cell junction. The protein localises to the tight junction. The protein resides in the cell membrane. Functionally, plays a role in regulating the structure of the Golgi apparatus. The chain is Tight junction-associated protein 1 from Mus musculus (Mouse).